The sequence spans 483 residues: Proton-coupled amino acid transporter 2 (483 aa).

At 1–58 the chain is on the cytoplasmic side; it reads MSVTKSTEGPQGAVAIKLDLMSPPESAKKLENKDSTFLDESPSESAGLKKTKGITVFQ. Residues 26–36 are compositionally biased toward basic and acidic residues; it reads SAKKLENKDST. Positions 26–46 are disordered; sequence SAKKLENKDSTFLDESPSESA. A helical transmembrane segment spans residues 59–79; that stretch reads ALIHLVKGNMGTGILGLPLAV. Over 80–81 the chain is Extracellular; it reads KN. The chain crosses the membrane as a helical span at residues 82-102; it reads AGILMGPLSLLVMGFIACHCM. The Cytoplasmic segment spans residues 103–148; sequence HILVKCAQRFCKRLNKPFMDYGDTVMHGLEANPNAWLQNHAHWGRH. Residues 149–169 form a helical membrane-spanning segment; the sequence is IVSFFLIITQLGFCCVYIVFL. At 170–197 the chain is on the extracellular side; it reads ADNLKQVVEAVNSTTNNCYSNETVILTP. The chain crosses the membrane as a helical span at residues 198-218; sequence TMDSRLYMLSFLPFLVLLVLI. Topologically, residues 219–222 are cytoplasmic; sequence RNLR. Residues 223–243 form a helical membrane-spanning segment; that stretch reads ILTIFSMLANISMLVSLVIII. At 244–264 the chain is on the extracellular side; the sequence is QYITQEIPDPSRLPLVASWKT. A helical transmembrane segment spans residues 265–285; that stretch reads YPLFFGTAIFSFESIGVVLPL. Topologically, residues 286-296 are cytoplasmic; that stretch reads ENKMKNARHFP. The chain crosses the membrane as a helical span at residues 297-317; it reads AILSLGMSIVTSLYIGMAALG. The Extracellular segment spans residues 318–349; that stretch reads YLRFGDDIKASISLNLPNCWLYQSVKLLYIAG. A helical transmembrane segment spans residues 350–370; the sequence is ILCTYALQFYVPAEIIIPFAI. The Cytoplasmic portion of the chain corresponds to 371–379; it reads SRVSTRWAL. The helical transmembrane segment at 380–400 threads the bilayer; that stretch reads PLDLSIRLVMVCLTCLLAILI. Residues 401–404 lie on the Extracellular side of the membrane; sequence PRLD. Residues 405–425 traverse the membrane as a helical segment; that stretch reads LVISLVGSVSGTALALIIPPL. Residues 426-437 are Cytoplasmic-facing; the sequence is LEVTTFYSEGMS. The chain crosses the membrane as a helical span at residues 438–458; sequence PLTIFKDALISILGFVGFVVG. The Extracellular portion of the chain corresponds to 459-483; that stretch reads TYQALDELLKSEDSHPFSNSTTFVR.

This sequence belongs to the amino acid/polyamine transporter 2 family. As to expression, abundantly expressed in kidney and muscle. Expressed in the S1 segment of the proximal tubule close to the glomerulus.

It localises to the cell membrane. The protein localises to the endoplasmic reticulum membrane. Its subcellular location is the recycling endosome membrane. The catalysed reaction is glycine(in) + H(+)(in) = glycine(out) + H(+)(out). It carries out the reaction L-alanine(in) + H(+)(in) = L-alanine(out) + H(+)(out). The enzyme catalyses D-alanine(in) + H(+)(in) = D-alanine(out) + H(+)(out). It catalyses the reaction L-proline(out) + H(+)(out) = L-proline(in) + H(+)(in). The catalysed reaction is D-proline(out) + H(+)(out) = D-proline(in) + H(+)(in). It carries out the reaction 4-hydroxy-L-proline(in) + H(+)(in) = 4-hydroxy-L-proline(out) + H(+)(out). The enzyme catalyses L-serine(in) + H(+)(in) = L-serine(out) + H(+)(out). It catalyses the reaction D-serine(out) + H(+)(out) = D-serine(in) + H(+)(in). The catalysed reaction is beta-alanine(in) + H(+)(in) = beta-alanine(out) + H(+)(out). It carries out the reaction 4-aminobutanoate(in) + H(+)(in) = 4-aminobutanoate(out) + H(+)(out). The enzyme catalyses sarcosine(in) + H(+)(in) = sarcosine(out) + H(+)(out). It catalyses the reaction N,N-dimethylglycine(in) + H(+)(in) = N,N-dimethylglycine(out) + H(+)(out). Its function is as follows. Electrogenic proton/amino acid symporter with a high selectivity for the small side chains amino acids glycine, alanine and proline, where both L- and D-enantiomers are transported. Extension of the backbone length, as in beta-alanine and 4-aminobutanoate or methylation of the amino group, as in sarcosine and N,N-dimethylglycine, are also tolerated but decrease transport efficiency. A free carboxyl group is preferred. The polypeptide is Proton-coupled amino acid transporter 2 (Homo sapiens (Human)).